Reading from the N-terminus, the 156-residue chain is 6,7-dimethyl-8-ribityllumazine synthase (156 aa).

5-amino-6-(D-ribitylamino)uracil is bound by residues Phe-22, 57–59 (AYE), and 81–83 (TVI). 86 to 87 (GT) provides a ligand contact to (2S)-2-hydroxy-3-oxobutyl phosphate. The Proton donor role is filled by His-89. Phe-114 provides a ligand contact to 5-amino-6-(D-ribitylamino)uracil. A (2S)-2-hydroxy-3-oxobutyl phosphate-binding site is contributed by Arg-128.

Belongs to the DMRL synthase family. As to quaternary structure, forms an icosahedral capsid composed of 60 subunits, arranged as a dodecamer of pentamers.

It catalyses the reaction (2S)-2-hydroxy-3-oxobutyl phosphate + 5-amino-6-(D-ribitylamino)uracil = 6,7-dimethyl-8-(1-D-ribityl)lumazine + phosphate + 2 H2O + H(+). The protein operates within cofactor biosynthesis; riboflavin biosynthesis; riboflavin from 2-hydroxy-3-oxobutyl phosphate and 5-amino-6-(D-ribitylamino)uracil: step 1/2. In terms of biological role, catalyzes the formation of 6,7-dimethyl-8-ribityllumazine by condensation of 5-amino-6-(D-ribitylamino)uracil with 3,4-dihydroxy-2-butanone 4-phosphate. This is the penultimate step in the biosynthesis of riboflavin. The sequence is that of 6,7-dimethyl-8-ribityllumazine synthase from Photorhabdus laumondii subsp. laumondii (strain DSM 15139 / CIP 105565 / TT01) (Photorhabdus luminescens subsp. laumondii).